The primary structure comprises 834 residues: Leucine--tRNA ligase (834 aa).

The 'HIGH' region motif lies at 40-50 (PYPSGNIHMGH). A 'KMSKS' region motif is present at residues 586–590 (KMSKS). Residue K589 participates in ATP binding.

It belongs to the class-I aminoacyl-tRNA synthetase family.

The protein localises to the cytoplasm. It catalyses the reaction tRNA(Leu) + L-leucine + ATP = L-leucyl-tRNA(Leu) + AMP + diphosphate. The chain is Leucine--tRNA ligase from Nitratidesulfovibrio vulgaris (strain DSM 19637 / Miyazaki F) (Desulfovibrio vulgaris).